We begin with the raw amino-acid sequence, 1178 residues long: Niemann-Pick type C1-related protein (1178 aa).

An N-linked (GlcNAc...) asparagine glycan is attached at Asn41. Helical transmembrane passes span 157-177 and 412-432; these read PWLF…GIFL and VVEW…TSVV. Residues 414–570 enclose the SSD domain; sequence EWLRLCAAVL…LTFFLAGLSL (157 aa). A glycan (N-linked (GlcNAc...) asparagine) is linked at Asn433. The next 4 membrane-spanning stretches (helical) occupy residues 448-468, 478-498, 516-536, and 545-565; these read GALA…LCGV, PFLA…AYSL, AGLS…IGAL, and FCII…TFFL. An N-linked (GlcNAc...) asparagine glycan is attached at Asn621. The helical transmembrane segment at 789–809 threads the bilayer; sequence ATVLVIFAAVTALAIYGATTL. Asn917 and Asn943 each carry an N-linked (GlcNAc...) asparagine glycan. A run of 5 helical transmembrane segments spans residues 986-1006, 1013-1033, 1037-1057, 1080-1100, and 1114-1134; these read FTLT…LLLI, IIVV…MALI, LSMI…DFTI, IVMG…ILAL, and MMFM…PVVL.

Belongs to the patched family.

The protein resides in the inner membrane complex. It carries out the reaction cholesterol(in) = cholesterol(out). Its function is as follows. Likely facilitates the efflux of cholesterol and gangliosides from membranes. Plays a role in the regulation of lipid homeostasis. The polypeptide is Niemann-Pick type C1-related protein (Toxoplasma gondii (strain ATCC 50611 / Me49)).